Here is a 793-residue protein sequence, read N- to C-terminus: 3',5'-cyclic-nucleotide phosphodiesterase regA (793 aa).

The interval 1 to 153 (MNNKQEEIDQ…SSHRVSDFSD (153 aa)) is disordered. 3 stretches are compositionally biased toward low complexity: residues 13–34 (SSTS…DSTS), 54–69 (NKNN…SNNN), and 80–121 (NNSS…NNNN). The Response regulatory domain occupies 161-280 (RILVADDDDV…LLKKKIDTVL (120 aa)). Asp212 bears the 4-aspartylphosphate mark. Residues 410-733 (RRNSIPTFPQ…ENWQAYMELQ (324 aa)) enclose the PDEase domain. His487 (proton donor) is an active-site residue. The a divalent metal cation site is built by His491, His527, Asp528, and Asp639. A disordered region spans residues 756 to 793 (KLPKIDEEENRDKVSSSSSSSTAPLTSTSSSNNETSSS). The span at 770-793 (SSSSSSSTAPLTSTSSSNNETSSS) shows a compositional bias: low complexity.

Belongs to the cyclic nucleotide phosphodiesterase family. A divalent metal cation serves as cofactor. The phosphorelay mechanism involves the sequential transfer of a phosphate group from Asp-212 of pde2 to 'His-65' of rdeA. Phosphorylation of Asp-212 activates the phosphodiesterase domain.

The protein localises to the cytoplasm. Its subcellular location is the cytosol. It carries out the reaction 3',5'-cyclic AMP + H2O = AMP + H(+). Its activity is regulated as follows. Inhibited by 3-isobutyl-1-methylxanthine (IBMX). In terms of biological role, phosphodiesterase specific for cAMP. Involved in the degradation of intracellular cAMP. Morphological suppressor of tagB. Phosphorelay protein that accepts phosphate from rdeA or supplies phosphate from regA; depending on the relative concentration of the phosphodonor proteins. The protein is 3',5'-cyclic-nucleotide phosphodiesterase regA (regA) of Dictyostelium discoideum (Social amoeba).